The following is a 1088-amino-acid chain: V-type proton ATPase catalytic subunit A (1088 aa).

257-264 serves as a coordination point for ATP; sequence GAFGCGKT. Positions 485–662 constitute a DOD-type homing endonuclease domain; the sequence is LLGTWAGIGN…LVKIAHSLGI (178 aa).

Belongs to the ATPase alpha/beta chains family. V-ATPase is a heteromultimeric enzyme composed of a peripheral catalytic V1 complex (components A to H) attached to an integral membrane V0 proton pore complex (components: a, c, c', c'', d, e, f and VOA1). Post-translationally, this protein undergoes a protein self splicing that involves a post-translational excision of the VDE intervening region (intein) followed by peptide ligation.

The protein resides in the vacuole membrane. The catalysed reaction is ATP + H2O + 4 H(+)(in) = ADP + phosphate + 5 H(+)(out). Its function is as follows. Catalytic subunit of the V1 complex of vacuolar(H+)-ATPase (V-ATPase), a multisubunit enzyme composed of a peripheral complex (V1) that hydrolyzes ATP and a membrane integral complex (V0) that translocates protons. V-ATPase is responsible for acidifying and maintaining the pH of intracellular compartments. Functionally, VDE is an endonuclease that can cleave at a site present in a VMA1 allele that lacks the derived endonuclease segment of the open reading frame; cleavage at this site only occurs during meiosis and initiates 'homing', a genetic event that converts a VMA1 allele lacking VDE into one that contains it. The sequence is that of V-type proton ATPase catalytic subunit A (VMA1) from Candida tropicalis (Yeast).